Here is a 458-residue protein sequence, read N- to C-terminus: Tetratricopeptide repeat protein 23-like (458 aa).

Coiled coils occupy residues 175 to 198 (GKQA…LNNG) and 246 to 278 (TSEL…QAYS).

The protein localises to the cytoplasm. It localises to the cytoskeleton. The protein resides in the microtubule organizing center. Its subcellular location is the centrosome. It is found in the spindle. The protein localises to the midbody. In Mus musculus (Mouse), this protein is Tetratricopeptide repeat protein 23-like (Ttc23l).